The primary structure comprises 271 residues: Mannosyl-3-phosphoglycerate phosphatase (271 aa).

The Nucleophile role is filled by Asp-13. 3 residues coordinate Mg(2+): Asp-13, Asp-15, and Asp-214.

It belongs to the HAD-like hydrolase superfamily. MPGP family. The cofactor is Mg(2+).

It is found in the cytoplasm. The enzyme catalyses 2-O-(alpha-D-mannosyl)-3-phosphoglycerate + H2O = (2R)-2-O-(alpha-D-mannosyl)-glycerate + phosphate. The chain is Mannosyl-3-phosphoglycerate phosphatase (yedP) from Escherichia coli O157:H7.